The primary structure comprises 134 residues: Putative STAG3-like protein 2 (134 aa).

Residues 10–95 (PKVTCRDVLP…GRFKDWMVSM (86 aa)) form the SCD domain.

The protein belongs to the SCC3 family.

Its subcellular location is the nucleus. In Homo sapiens (Human), this protein is Putative STAG3-like protein 2 (STAG3L2).